A 362-amino-acid polypeptide reads, in one-letter code: Peptide chain release factor 1 (362 aa).

Gln-236 is modified (N5-methylglutamine).

This sequence belongs to the prokaryotic/mitochondrial release factor family. In terms of processing, methylated by PrmC. Methylation increases the termination efficiency of RF1.

The protein localises to the cytoplasm. In terms of biological role, peptide chain release factor 1 directs the termination of translation in response to the peptide chain termination codons UAG and UAA. The protein is Peptide chain release factor 1 of Lactobacillus helveticus (strain DPC 4571).